The chain runs to 500 residues: Catalase (500 aa).

Active-site residues include His59 and Asn131. Tyr339 provides a ligand contact to heme.

Belongs to the catalase family. Requires heme as cofactor.

It carries out the reaction 2 H2O2 = O2 + 2 H2O. In terms of biological role, decomposes hydrogen peroxide into water and oxygen; serves to protect cells from the toxic effects of hydrogen peroxide. The polypeptide is Catalase (katA) (Neisseria gonorrhoeae).